We begin with the raw amino-acid sequence, 1400 residues long: Tiny macrocysts protein C (1400 aa).

8 consecutive transmembrane segments (helical) span residues 59–79 (ILTI…GFKQ), 112–132 (IFFW…WYVA), 152–172 (FVST…LIGL), 196–216 (ANLS…IVGF), 240–260 (FDVY…LVDF), 266–286 (SIVY…ILPY), 296–316 (SGFY…MGIN), and 320–340 (TATT…IGYF). Disordered regions lie at residues 367-393 (FNEI…SKVT) and 683-712 (ERSG…RGKY). A compositionally biased stretch (basic and acidic residues) spans 369-386 (EITKNEKSKTGDSKEKES). 4 consecutive transmembrane segments (helical) span residues 726–746 (WLMI…LIVL), 975–995 (TMLY…AVLF), 1162–1182 (VLAI…TYSV), and 1342–1362 (VLTS…LLLF).

The protein localises to the membrane. The chain is Tiny macrocysts protein C (tmcC) from Dictyostelium discoideum (Social amoeba).